The sequence spans 126 residues: C-type natriuretic peptide (126 aa).

The N-terminal stretch at 1-23 (MHLSQLIACALLLALLSLRPSEA) is a signal peptide. The segment at 20–73 (PSEAKPGTPPKVPRTPPGEELADSQAAGGNQKKGDKTPGSGGANLKGDRSRLLR) is disordered. The propeptide occupies 24–73 (KPGTPPKVPRTPPGEELADSQAAGGNQKKGDKTPGSGGANLKGDRSRLLR). Over residues 26–35 (GTPPKVPRTP) the composition is skewed to pro residues. Cysteine 110 and cysteine 126 are disulfide-bonded.

It belongs to the natriuretic peptide family. In terms of processing, degraded by IDE (in vitro).

The protein resides in the secreted. In terms of biological role, hormone which plays a role in endochondral ossification through regulation of cartilaginous growth plate chondrocytes proliferation and differentiation. May also be vasoactive and natriuretic. Acts by specifically binding and stimulating NPR2 to produce cGMP. Binds the clearance receptor NPR3. The protein is C-type natriuretic peptide (Nppc) of Mus musculus (Mouse).